Consider the following 59-residue polypeptide: Large ribosomal subunit protein uL30 (59 aa).

Belongs to the universal ribosomal protein uL30 family. Part of the 50S ribosomal subunit.

The sequence is that of Large ribosomal subunit protein uL30 from Pelotomaculum thermopropionicum (strain DSM 13744 / JCM 10971 / SI).